Here is a 99-residue protein sequence, read N- to C-terminus: Integration host factor subunit alpha (99 aa).

The tract at residues 49-71 is disordered; sequence FGNFDLRDKNQRPGRNPKTGEDI.

Belongs to the bacterial histone-like protein family. Heterodimer of an alpha and a beta chain.

In terms of biological role, this protein is one of the two subunits of integration host factor, a specific DNA-binding protein that functions in genetic recombination as well as in transcriptional and translational control. This chain is Integration host factor subunit alpha, found in Shewanella frigidimarina (strain NCIMB 400).